Reading from the N-terminus, the 238-residue chain is DNA repair protein RecO (238 aa).

It belongs to the RecO family.

Its function is as follows. Involved in DNA repair and RecF pathway recombination. The sequence is that of DNA repair protein RecO from Anaplasma marginale (strain St. Maries).